The chain runs to 389 residues: S-adenosylmethionine synthase (389 aa).

Position 17 (His-17) interacts with ATP. Asp-19 is a Mg(2+) binding site. Glu-45 is a K(+) binding site. L-methionine contacts are provided by Glu-58 and Gln-101. A flexible loop region spans residues 101 to 111 (QSPDISQGVTE). ATP is bound by residues 168-170 (DSK), 234-235 (RF), Asp-243, 249-250 (RK), Ala-266, and Lys-270. Asp-243 contacts L-methionine. Lys-274 serves as a coordination point for L-methionine.

It belongs to the AdoMet synthase family. As to quaternary structure, homotetramer; dimer of dimers. Mg(2+) serves as cofactor. Requires K(+) as cofactor.

Its subcellular location is the cytoplasm. The catalysed reaction is L-methionine + ATP + H2O = S-adenosyl-L-methionine + phosphate + diphosphate. It participates in amino-acid biosynthesis; S-adenosyl-L-methionine biosynthesis; S-adenosyl-L-methionine from L-methionine: step 1/1. Functionally, catalyzes the formation of S-adenosylmethionine (AdoMet) from methionine and ATP. The overall synthetic reaction is composed of two sequential steps, AdoMet formation and the subsequent tripolyphosphate hydrolysis which occurs prior to release of AdoMet from the enzyme. The chain is S-adenosylmethionine synthase from Geobacter metallireducens (strain ATCC 53774 / DSM 7210 / GS-15).